A 311-amino-acid chain; its full sequence is Glycine--tRNA ligase alpha subunit (311 aa).

The protein belongs to the class-II aminoacyl-tRNA synthetase family. As to quaternary structure, tetramer of two alpha and two beta subunits.

Its subcellular location is the cytoplasm. The catalysed reaction is tRNA(Gly) + glycine + ATP = glycyl-tRNA(Gly) + AMP + diphosphate. The protein is Glycine--tRNA ligase alpha subunit of Bradyrhizobium diazoefficiens (strain JCM 10833 / BCRC 13528 / IAM 13628 / NBRC 14792 / USDA 110).